Reading from the N-terminus, the 514-residue chain is Putative binding protein HI_0213 (514 aa).

The first 23 residues, 1 to 23 (MNNLFALCQRSAVIFSIIFTVVA), serve as a signal peptide directing secretion. Residue cysteine 24 is the site of N-palmitoyl cysteine attachment. The S-diacylglycerol cysteine moiety is linked to residue cysteine 24.

This sequence belongs to the bacterial solute-binding protein 5 family.

It is found in the cell membrane. Part of a binding-protein-dependent transport system. The chain is Putative binding protein HI_0213 from Haemophilus influenzae (strain ATCC 51907 / DSM 11121 / KW20 / Rd).